The chain runs to 60 residues: Large ribosomal subunit protein uL30 (60 aa).

It belongs to the universal ribosomal protein uL30 family. In terms of assembly, part of the 50S ribosomal subunit.

The chain is Large ribosomal subunit protein uL30 from Cupriavidus metallidurans (strain ATCC 43123 / DSM 2839 / NBRC 102507 / CH34) (Ralstonia metallidurans).